Here is a 481-residue protein sequence, read N- to C-terminus: Argininosuccinate lyase (481 aa).

Belongs to the lyase 1 family. Argininosuccinate lyase subfamily.

It is found in the cytoplasm. The enzyme catalyses 2-(N(omega)-L-arginino)succinate = fumarate + L-arginine. The protein operates within amino-acid biosynthesis; L-arginine biosynthesis; L-arginine from L-ornithine and carbamoyl phosphate: step 3/3. This Methanococcus maripaludis (strain C7 / ATCC BAA-1331) protein is Argininosuccinate lyase.